The chain runs to 154 residues: Low molecular weight protein-tyrosine-phosphatase PtpA (154 aa).

Cysteine 8 (nucleophile) is an active-site residue. Residue arginine 14 is part of the active site. Catalysis depends on aspartate 120, which acts as the Proton donor.

This sequence belongs to the low molecular weight phosphotyrosine protein phosphatase family.

The enzyme catalyses O-phospho-L-tyrosyl-[protein] + H2O = L-tyrosyl-[protein] + phosphate. In terms of biological role, dephosphorylates the phosphotyrosine-containing proteins. The sequence is that of Low molecular weight protein-tyrosine-phosphatase PtpA (ptpA) from Staphylococcus epidermidis (strain ATCC 35984 / DSM 28319 / BCRC 17069 / CCUG 31568 / BM 3577 / RP62A).